The chain runs to 217 residues: uncharacterized protein (217 aa).

Residues 26–48 (VFMRGYVVGLVLALMLVTAPAMA) traverse the membrane as a helical segment.

It is found in the membrane. This is an uncharacterized protein from Archaeoglobus fulgidus (strain ATCC 49558 / DSM 4304 / JCM 9628 / NBRC 100126 / VC-16).